Consider the following 416-residue polypeptide: Adrenocortical dysplasia protein (416 aa).

A PWI motif is present at residues 11 to 13; the sequence is PWI. Position 25 is a phosphoserine (Ser-25). The segment at 156-245 is interaction with POT1; sequence ESASSSAGLT…SSTGSSQKAR (90 aa). The span at 234 to 251 shows a compositional bias: polar residues; sequence ILSSTGSSQKARGTSASP. A disordered region spans residues 234-306; that stretch reads ILSSTGSSQK…TSPPCNSTPS (73 aa). Positions 259 to 272 are enriched in low complexity; it reads SGASVSLLSALATS. Over residues 273 to 292 the composition is skewed to polar residues; the sequence is DPGQMDSSQSPPAVGSTSPR. 2 positions are modified to phosphoserine: Ser-313 and Ser-317. Lys-345 is covalently cross-linked (Glycyl lysine isopeptide (Lys-Gly) (interchain with G-Cter in SUMO2)).

In terms of assembly, component of the shelterin complex (telosome) composed of TERF1, TERF2, TINF2, TERF2IP ACD and POT1. Forms heterodimers with POT1. Identified in a complex with POT1 and single-stranded telomeric DNA. Interacts with STN1 and TINF2. As to expression, ubiquitous.

It localises to the nucleus. Its subcellular location is the chromosome. The protein resides in the telomere. Component of the shelterin complex (telosome) that is involved in the regulation of telomere length and protection. Shelterin associates with arrays of double-stranded TTAGGG repeats added by telomerase and protects chromosome ends. Without its protective activity, telomeres are no longer hidden from the DNA damage surveillance and chromosome ends are inappropriately processed by DNA repair pathways. Promotes binding of POT1 to single-stranded telomeric DNA. Modulates the inhibitory effects of POT1 on telomere elongation. The ACD-POT1 heterodimer enhances telomere elongation by recruiting telomerase to telomeres and increasing its processivity. May play a role in organogenesis. The chain is Adrenocortical dysplasia protein from Mus musculus (Mouse).